A 324-amino-acid polypeptide reads, in one-letter code: Phospho-N-acetylmuramoyl-pentapeptide-transferase (324 aa).

The next 10 helical transmembrane spans lie at 5-25 (VILF…PIFI), 52-72 (PTMG…VMTM), 77-97 (VSMN…LGFL), 117-137 (LIGQ…QGMP), 147-167 (LSFD…VGGS), 176-196 (LDGL…ILAW), 203-223 (VAIF…FNAH), 227-247 (VFMG…IAIL), 250-270 (LEIL…SVIL), and 302-322 (VVVT…YIEV).

It belongs to the glycosyltransferase 4 family. MraY subfamily. The cofactor is Mg(2+).

Its subcellular location is the cell membrane. It catalyses the reaction UDP-N-acetyl-alpha-D-muramoyl-L-alanyl-gamma-D-glutamyl-meso-2,6-diaminopimeloyl-D-alanyl-D-alanine + di-trans,octa-cis-undecaprenyl phosphate = di-trans,octa-cis-undecaprenyl diphospho-N-acetyl-alpha-D-muramoyl-L-alanyl-D-glutamyl-meso-2,6-diaminopimeloyl-D-alanyl-D-alanine + UMP. Its pathway is cell wall biogenesis; peptidoglycan biosynthesis. In terms of biological role, catalyzes the initial step of the lipid cycle reactions in the biosynthesis of the cell wall peptidoglycan: transfers peptidoglycan precursor phospho-MurNAc-pentapeptide from UDP-MurNAc-pentapeptide onto the lipid carrier undecaprenyl phosphate, yielding undecaprenyl-pyrophosphoryl-MurNAc-pentapeptide, known as lipid I. The chain is Phospho-N-acetylmuramoyl-pentapeptide-transferase from Bacillus licheniformis (strain ATCC 14580 / DSM 13 / JCM 2505 / CCUG 7422 / NBRC 12200 / NCIMB 9375 / NCTC 10341 / NRRL NRS-1264 / Gibson 46).